A 152-amino-acid polypeptide reads, in one-letter code: tRNA-specific adenosine deaminase (152 aa).

The CMP/dCMP-type deaminase domain occupies 2–111 (AERTHFMELA…AQDPKGGAVE (110 aa)). Zn(2+) is bound at residue histidine 53. The active-site Proton donor is glutamate 55. Zn(2+) contacts are provided by cysteine 83 and cysteine 86.

It belongs to the cytidine and deoxycytidylate deaminase family. In terms of assembly, homodimer. Requires Zn(2+) as cofactor.

It carries out the reaction adenosine(34) in tRNA + H2O + H(+) = inosine(34) in tRNA + NH4(+). Catalyzes the deamination of adenosine to inosine at the wobble position 34 of tRNA(Arg2). This chain is tRNA-specific adenosine deaminase, found in Agrobacterium fabrum (strain C58 / ATCC 33970) (Agrobacterium tumefaciens (strain C58)).